The sequence spans 277 residues: Large ribosomal subunit protein uL2 (277 aa).

A disordered region spans residues 222 to 277 (GVTMNPVDHPHGGGEGRTSGGRNPVTPWGFPTKGKKTRNNKATDKFIVSSRHKRKK).

Belongs to the universal ribosomal protein uL2 family. In terms of assembly, part of the 50S ribosomal subunit. Forms a bridge to the 30S subunit in the 70S ribosome.

One of the primary rRNA binding proteins. Required for association of the 30S and 50S subunits to form the 70S ribosome, for tRNA binding and peptide bond formation. It has been suggested to have peptidyltransferase activity; this is somewhat controversial. Makes several contacts with the 16S rRNA in the 70S ribosome. This Xanthobacter autotrophicus (strain ATCC BAA-1158 / Py2) protein is Large ribosomal subunit protein uL2.